The sequence spans 167 residues: Leukotoxin-activating lysine-acyltransferase LktC serotype T3 (167 aa).

Active-site residues include H22 and D91.

This sequence belongs to the RTX toxin acyltransferase family.

Its subcellular location is the cytoplasm. The enzyme catalyses a fatty acyl-[ACP] + L-lysyl-[protein] = N(6)-(fatty acyl)-L-lysyl-[protein] + holo-[ACP] + H(+). Its function is as follows. Involved in fatty acylation of the protoxin (LktA) at two internal lysine residues, thereby converting it to the active toxin. This chain is Leukotoxin-activating lysine-acyltransferase LktC serotype T3 (lktC), found in Mannheimia haemolytica (Pasteurella haemolytica).